A 141-amino-acid chain; its full sequence is Large ribosomal subunit protein uL16 (141 aa).

The span at 1 to 21 (MLMPKRTKFRKQMKGRNRGKS) shows a compositional bias: basic residues. Residues 1–22 (MLMPKRTKFRKQMKGRNRGKSF) are disordered.

It belongs to the universal ribosomal protein uL16 family. In terms of assembly, part of the 50S ribosomal subunit.

In terms of biological role, binds 23S rRNA and is also seen to make contacts with the A and possibly P site tRNAs. The chain is Large ribosomal subunit protein uL16 from Wolinella succinogenes (strain ATCC 29543 / DSM 1740 / CCUG 13145 / JCM 31913 / LMG 7466 / NCTC 11488 / FDC 602W) (Vibrio succinogenes).